The chain runs to 365 residues: Patr class I histocompatibility antigen, A-2 alpha chain (365 aa).

An N-terminal signal peptide occupies residues 1 to 24; that stretch reads MAVMPPRTLLLLLSGALALTQTWA. The interval 25–114 is alpha-1; sequence GSHSMRYFFT…LRGYYNQSED (90 aa). The Extracellular segment spans residues 25–308; sequence GSHSMRYFFT…EPSSQPTIPI (284 aa). Asn-110 carries an N-linked (GlcNAc...) asparagine glycan. Residues 115 to 206 are alpha-2; sequence GSHTIQIMYG…ENGKETLQRT (92 aa). Intrachain disulfides connect Cys-125–Cys-188 and Cys-227–Cys-283. An alpha-3 region spans residues 207 to 298; that stretch reads DPPKTHMTHH…GLPKPLTLRW (92 aa). The region spanning 209–295 is the Ig-like C1-type domain; the sequence is PKTHMTHHPI…QHEGLPKPLT (87 aa). The connecting peptide stretch occupies residues 299–308; sequence EPSSQPTIPI. The helical transmembrane segment at 309-332 threads the bilayer; that stretch reads VGIIAGLVLLGAVITGAVVAAVMW. Topologically, residues 333-365 are cytoplasmic; that stretch reads RRKSSDRKGGSYTQAASSDSAQGSDVSLTACKV. Residues 339–360 are disordered; the sequence is RKGGSYTQAASSDSAQGSDVSL. Ser-343 carries the post-translational modification Phosphoserine. Tyr-344 bears the Phosphotyrosine mark. Low complexity predominate over residues 346–359; it reads QAASSDSAQGSDVS. Phosphoserine is present on residues Ser-349, Ser-350, Ser-352, Ser-356, and Ser-359.

This sequence belongs to the MHC class I family. Heterodimer of an alpha chain and a beta chain (beta-2-microglobulin).

The protein resides in the membrane. Functionally, involved in the presentation of foreign antigens to the immune system. This is Patr class I histocompatibility antigen, A-2 alpha chain from Pan troglodytes (Chimpanzee).